The primary structure comprises 27 residues: Delta-conotoxin SuVIA (27 aa).

3 disulfide bridges follow: cysteine 1-cysteine 17, cysteine 8-cysteine 21, and cysteine 16-cysteine 25.

It belongs to the conotoxin O1 superfamily. In terms of tissue distribution, expressed by the venom duct, in the proximal part (indicative of a defensive role).

It is found in the secreted. In terms of biological role, this toxin activates voltage-gated sodium channels (Nav1.3/SCN3A (EC(50)=3.98 nM), Nav1.4/SCN4A (EC(50)=4.99 nM), Nav1.6/SCN8A (EC(50)=1.27 nM) and Nav1.7/SCN9A (EC(50)=2.42 nM)). It shifts the voltage-dependence of activation to more hyperpolarized potentials but has only little effect on channel inactivation. In vivo, it induces nocifensive or pain-like behaviors in mice when injected intraplantarly. This is coherent with the specific defensive role deduced from its proximal position in the venom gland. The protein is Delta-conotoxin SuVIA of Conus suturatus (Sutured cone).